A 570-amino-acid polypeptide reads, in one-letter code: Dihydroxy-acid dehydratase (570 aa).

Residues 1 to 25 are disordered; sequence MSQQDSPANADHRRRHSSIVVDGPG. A [2Fe-2S] cluster-binding site is contributed by Cys-60. Asp-92 provides a ligand contact to Mg(2+). Residue Cys-133 participates in [2Fe-2S] cluster binding. Asp-134 and Lys-135 together coordinate Mg(2+). Lys-135 is subject to N6-carboxylysine. Cys-202 provides a ligand contact to [2Fe-2S] cluster. Glu-453 contributes to the Mg(2+) binding site. Residue Ser-479 is the Proton acceptor of the active site.

It belongs to the IlvD/Edd family. As to quaternary structure, homodimer. It depends on [2Fe-2S] cluster as a cofactor. Mg(2+) is required as a cofactor.

The enzyme catalyses (2R)-2,3-dihydroxy-3-methylbutanoate = 3-methyl-2-oxobutanoate + H2O. The catalysed reaction is (2R,3R)-2,3-dihydroxy-3-methylpentanoate = (S)-3-methyl-2-oxopentanoate + H2O. It functions in the pathway amino-acid biosynthesis; L-isoleucine biosynthesis; L-isoleucine from 2-oxobutanoate: step 3/4. It participates in amino-acid biosynthesis; L-valine biosynthesis; L-valine from pyruvate: step 3/4. In terms of biological role, functions in the biosynthesis of branched-chain amino acids. Catalyzes the dehydration of (2R,3R)-2,3-dihydroxy-3-methylpentanoate (2,3-dihydroxy-3-methylvalerate) into 2-oxo-3-methylpentanoate (2-oxo-3-methylvalerate) and of (2R)-2,3-dihydroxy-3-methylbutanoate (2,3-dihydroxyisovalerate) into 2-oxo-3-methylbutanoate (2-oxoisovalerate), the penultimate precursor to L-isoleucine and L-valine, respectively. This chain is Dihydroxy-acid dehydratase, found in Chromohalobacter salexigens (strain ATCC BAA-138 / DSM 3043 / CIP 106854 / NCIMB 13768 / 1H11).